The following is a 156-amino-acid chain: MPRKGHIAKRDVLPDPVYNSKVVTKFINSIMEDGKKGVAQKICYEAFELIAQRSGKEALEVFEEAMNNVMPLLEVKARRIGGATYQVPMEVRTERRQTLGIRWMLIAARKRGEKLMCERVAGELLDASNNTGAAVKKREDTHKMAEANKAFAHYRY.

This sequence belongs to the universal ribosomal protein uS7 family. As to quaternary structure, part of the 30S ribosomal subunit. Contacts proteins S9 and S11.

In terms of biological role, one of the primary rRNA binding proteins, it binds directly to 16S rRNA where it nucleates assembly of the head domain of the 30S subunit. Is located at the subunit interface close to the decoding center, probably blocks exit of the E-site tRNA. The chain is Small ribosomal subunit protein uS7 from Clostridium botulinum (strain Alaska E43 / Type E3).